Here is a 221-residue protein sequence, read N- to C-terminus: Probable septum site-determining protein MinC (221 aa).

This sequence belongs to the MinC family. In terms of assembly, interacts with MinD and FtsZ.

Functionally, cell division inhibitor that blocks the formation of polar Z ring septums. Rapidly oscillates between the poles of the cell to destabilize FtsZ filaments that have formed before they mature into polar Z rings. Prevents FtsZ polymerization. The protein is Probable septum site-determining protein MinC of Shewanella frigidimarina (strain NCIMB 400).